The chain runs to 230 residues: 5'-methylthioadenosine/S-adenosylhomocysteine nucleosidase (230 aa).

The Proton acceptor role is filled by glutamate 12. Residues glycine 78, isoleucine 153, and 174–175 (ME) each bind substrate. Residue aspartate 198 is the Proton donor of the active site.

The protein belongs to the PNP/UDP phosphorylase family. MtnN subfamily.

The catalysed reaction is S-adenosyl-L-homocysteine + H2O = S-(5-deoxy-D-ribos-5-yl)-L-homocysteine + adenine. The enzyme catalyses S-methyl-5'-thioadenosine + H2O = 5-(methylsulfanyl)-D-ribose + adenine. It catalyses the reaction 5'-deoxyadenosine + H2O = 5-deoxy-D-ribose + adenine. The protein operates within amino-acid biosynthesis; L-methionine biosynthesis via salvage pathway; S-methyl-5-thio-alpha-D-ribose 1-phosphate from S-methyl-5'-thioadenosine (hydrolase route): step 1/2. Its function is as follows. Catalyzes the irreversible cleavage of the glycosidic bond in both 5'-methylthioadenosine (MTA) and S-adenosylhomocysteine (SAH/AdoHcy) to adenine and the corresponding thioribose, 5'-methylthioribose and S-ribosylhomocysteine, respectively. Also cleaves 5'-deoxyadenosine, a toxic by-product of radical S-adenosylmethionine (SAM) enzymes, into 5-deoxyribose and adenine. The chain is 5'-methylthioadenosine/S-adenosylhomocysteine nucleosidase from Shewanella piezotolerans (strain WP3 / JCM 13877).